We begin with the raw amino-acid sequence, 141 residues long: Ribonuclease P protein component (141 aa).

It belongs to the RnpA family. As to quaternary structure, consists of a catalytic RNA component (M1 or rnpB) and a protein subunit.

The catalysed reaction is Endonucleolytic cleavage of RNA, removing 5'-extranucleotides from tRNA precursor.. Its function is as follows. RNaseP catalyzes the removal of the 5'-leader sequence from pre-tRNA to produce the mature 5'-terminus. It can also cleave other RNA substrates such as 4.5S RNA. The protein component plays an auxiliary but essential role in vivo by binding to the 5'-leader sequence and broadening the substrate specificity of the ribozyme. In Onion yellows phytoplasma (strain OY-M), this protein is Ribonuclease P protein component.